The primary structure comprises 366 residues: Glutamate 5-kinase (366 aa).

Lys17 contributes to the ATP binding site. Ser57, Asp144, and Asn156 together coordinate substrate. Residues 176–177 and 216–222 each bind ATP; these read SD and TGGMASK. Positions 278–352 constitute a PUA domain; the sequence is QGILHIDEGA…GKSTQELPAE (75 aa).

This sequence belongs to the glutamate 5-kinase family.

Its subcellular location is the cytoplasm. It carries out the reaction L-glutamate + ATP = L-glutamyl 5-phosphate + ADP. It participates in amino-acid biosynthesis; L-proline biosynthesis; L-glutamate 5-semialdehyde from L-glutamate: step 1/2. Functionally, catalyzes the transfer of a phosphate group to glutamate to form L-glutamate 5-phosphate. The sequence is that of Glutamate 5-kinase from Rhodococcus opacus (strain B4).